We begin with the raw amino-acid sequence, 356 residues long: Sterol-4-alpha-carboxylate 3-dehydrogenase, decarboxylating (356 aa).

Met1 is subject to N-acetylmethionine. The active-site Proton acceptor is the Tyr155. Residue Lys159 coordinates NAD(+). A helical membrane pass occupies residues 281–301 (WLAYYLALLVSLLVMVISPVI). The short motif at 353–356 (RKVM) is the Prevents secretion from ER element.

It belongs to the 3-beta-HSD family. In terms of assembly, homodimer.

It is found in the endoplasmic reticulum membrane. It localises to the lipid droplet. The enzyme catalyses a 3beta-hydroxysteroid-4alpha-carboxylate + NADP(+) = a 3-oxosteroid + CO2 + NADPH. It carries out the reaction a 3beta-hydroxysteroid-4alpha-carboxylate + NAD(+) = a 3-oxosteroid + CO2 + NADH. It catalyses the reaction 4alpha-carboxyzymosterol + NADP(+) = zymosterone + CO2 + NADPH. The catalysed reaction is 4alpha-carboxy-4beta-methyl-5alpha-cholest-8-en-3beta-ol + NADP(+) = 4alpha-methyl-5alpha-cholest-8-en-3-one + CO2 + NADPH. The enzyme catalyses 4alpha-carboxy-5alpha-cholest-8-ene-3beta-ol + NADP(+) = 5alpha-cholest-8-en-3-one + CO2 + NADPH. It carries out the reaction 4beta-methylzymosterol-4alpha-carboxylate + NADP(+) = 3-dehydro-4-methylzymosterol + CO2 + NADPH. It catalyses the reaction 4beta-methylzymosterol-4alpha-carboxylate + NAD(+) = 3-dehydro-4-methylzymosterol + CO2 + NADH. The catalysed reaction is 4alpha-carboxy-5alpha-cholest-8-ene-3beta-ol + NAD(+) = 5alpha-cholest-8-en-3-one + CO2 + NADH. The enzyme catalyses 4alpha-carboxy-4beta-methyl-5alpha-cholest-8-en-3beta-ol + NAD(+) = 4alpha-methyl-5alpha-cholest-8-en-3-one + CO2 + NADH. It carries out the reaction 4alpha-carboxyzymosterol + NAD(+) = zymosterone + CO2 + NADH. It participates in steroid biosynthesis; zymosterol biosynthesis; zymosterol from lanosterol: step 4/6. In terms of biological role, catalyzes the NAD(P)(+)-dependent oxidative decarboxylation of the C4 methyl groups of 4-alpha-carboxysterols in post-squalene cholesterol biosynthesis. Also plays a role in the regulation of the endocytic trafficking of EGFR. The sequence is that of Sterol-4-alpha-carboxylate 3-dehydrogenase, decarboxylating (NSDHL) from Bos taurus (Bovine).